The chain runs to 78 residues: Sec-independent protein translocase protein TatA (78 aa).

A helical membrane pass occupies residues Met-1 to Phe-21. The tract at residues Glu-50 to Thr-78 is disordered. Residues Lys-59–Thr-78 show a composition bias toward basic and acidic residues.

This sequence belongs to the TatA/E family. Forms a complex with TatC.

The protein localises to the cell membrane. Part of the twin-arginine translocation (Tat) system that transports large folded proteins containing a characteristic twin-arginine motif in their signal peptide across membranes. TatA could form the protein-conducting channel of the Tat system. This is Sec-independent protein translocase protein TatA from Natranaerobius thermophilus (strain ATCC BAA-1301 / DSM 18059 / JW/NM-WN-LF).